Consider the following 220-residue polypeptide: Deoxyribose-phosphate aldolase (220 aa).

Catalysis depends on Asp-89, which acts as the Proton donor/acceptor. Residue Lys-151 is the Schiff-base intermediate with acetaldehyde of the active site. Catalysis depends on Lys-180, which acts as the Proton donor/acceptor.

The protein belongs to the DeoC/FbaB aldolase family. DeoC type 1 subfamily.

It is found in the cytoplasm. It carries out the reaction 2-deoxy-D-ribose 5-phosphate = D-glyceraldehyde 3-phosphate + acetaldehyde. The protein operates within carbohydrate degradation; 2-deoxy-D-ribose 1-phosphate degradation; D-glyceraldehyde 3-phosphate and acetaldehyde from 2-deoxy-alpha-D-ribose 1-phosphate: step 2/2. Its function is as follows. Catalyzes a reversible aldol reaction between acetaldehyde and D-glyceraldehyde 3-phosphate to generate 2-deoxy-D-ribose 5-phosphate. This is Deoxyribose-phosphate aldolase from Streptococcus sanguinis (strain SK36).